The sequence spans 714 residues: Fatty acid oxidation complex subunit alpha (714 aa).

The tract at residues 1 to 190 (MEMASVFTLN…KLGLVDDVVP (190 aa)) is enoyl-CoA hydratase. Residues 306–714 (APLNSVGILG…FWKTTATDLQ (409 aa)) form a 3-hydroxyacyl-CoA dehydrogenase region.

The protein in the N-terminal section; belongs to the enoyl-CoA hydratase/isomerase family. In the central section; belongs to the 3-hydroxyacyl-CoA dehydrogenase family. Heterotetramer of two alpha chains (FadJ) and two beta chains (FadI).

It is found in the cytoplasm. The enzyme catalyses a (3S)-3-hydroxyacyl-CoA = a (2E)-enoyl-CoA + H2O. The catalysed reaction is a 4-saturated-(3S)-3-hydroxyacyl-CoA = a (3E)-enoyl-CoA + H2O. It catalyses the reaction a (3S)-3-hydroxyacyl-CoA + NAD(+) = a 3-oxoacyl-CoA + NADH + H(+). It carries out the reaction (3S)-3-hydroxybutanoyl-CoA = (3R)-3-hydroxybutanoyl-CoA. It functions in the pathway lipid metabolism; fatty acid beta-oxidation. Functionally, catalyzes the formation of a hydroxyacyl-CoA by addition of water on enoyl-CoA. Also exhibits 3-hydroxyacyl-CoA epimerase and 3-hydroxyacyl-CoA dehydrogenase activities. The protein is Fatty acid oxidation complex subunit alpha of Escherichia coli (strain SE11).